The sequence spans 500 residues: ATP synthase subunit alpha (500 aa).

Position 169-176 (169-176) interacts with ATP; the sequence is GDRQTGKT.

This sequence belongs to the ATPase alpha/beta chains family. As to quaternary structure, F-type ATPases have 2 components, CF(1) - the catalytic core - and CF(0) - the membrane proton channel. CF(1) has five subunits: alpha(3), beta(3), gamma(1), delta(1), epsilon(1). CF(0) has three main subunits: a(1), b(2) and c(9-12). The alpha and beta chains form an alternating ring which encloses part of the gamma chain. CF(1) is attached to CF(0) by a central stalk formed by the gamma and epsilon chains, while a peripheral stalk is formed by the delta and b chains.

It localises to the cell membrane. It catalyses the reaction ATP + H2O + 4 H(+)(in) = ADP + phosphate + 5 H(+)(out). Its function is as follows. Produces ATP from ADP in the presence of a proton gradient across the membrane. The alpha chain is a regulatory subunit. The protein is ATP synthase subunit alpha of Clostridioides difficile (strain 630) (Peptoclostridium difficile).